The sequence spans 214 residues: Soluble inorganic pyrophosphatase (214 aa).

Residues 1–20 form a disordered region; the sequence is MSEEDKTAASAEQPKRAPKL. Residues lysine 64, arginine 78, and tyrosine 90 each contribute to the substrate site. The Mg(2+) site is built by aspartate 100, aspartate 105, and aspartate 137. Residue tyrosine 174 participates in substrate binding.

The protein belongs to the PPase family. Requires Mg(2+) as cofactor.

The protein resides in the cytoplasm. The catalysed reaction is diphosphate + H2O = 2 phosphate + H(+). The polypeptide is Soluble inorganic pyrophosphatase (IPP) (Zea mays (Maize)).